The primary structure comprises 570 residues: Protein HEATR9 (570 aa).

This chain is Protein HEATR9 (HEATR9), found in Homo sapiens (Human).